A 729-amino-acid chain; its full sequence is E3 ubiquitin-protein ligase Trim36 (729 aa).

The RING-type; degenerate zinc-finger motif lies at 33–84 (CPACKELFTHPLILPCQHSVCHKCVKELLLSLDDSFNDVASDSSNQSSPRLR). 2 consecutive B box-type zinc fingers follow at residues 154–192 (AIMC…WGTV) and 207–249 (PKVL…VTTM). Residues cysteine 212, histidine 215, cysteine 235, and histidine 241 each contribute to the Zn(2+) site. The stretch at 271–302 (ESQVKSQISELNLLMKETECNGERAKEEALAH) forms a coiled coil. The COS domain occupies 356 to 413 (LKETDQSCFVQTAKQLHLRIQKATESLKSFRPAAQASFEDYVVNISKQTEVLGELSFF). The region spanning 416-511 (GIDIPEINEE…RELILHTPPA (96 aa)) is the Fibronectin type-III domain. Positions 509–723 (PPAPVFSFLF…LEEAITAKYL (215 aa)) constitute a B30.2/SPRY domain. The tract at residues 606–626 (RDAASPRYEQDSGHDSGSEDA) is disordered. Over residues 613–622 (YEQDSGHDSG) the composition is skewed to basic and acidic residues.

The protein belongs to the TRIM/RBCC family. As to quaternary structure, interacts with CENPH. In terms of tissue distribution, expressed in testis. Strongly expressed in the neural tube region in 14.5 dpc embryos.

It is found in the cytoplasm. The protein localises to the cytoplasmic vesicle. It localises to the secretory vesicle. Its subcellular location is the acrosome. The protein resides in the cytoskeleton. The catalysed reaction is S-ubiquitinyl-[E2 ubiquitin-conjugating enzyme]-L-cysteine + [acceptor protein]-L-lysine = [E2 ubiquitin-conjugating enzyme]-L-cysteine + N(6)-ubiquitinyl-[acceptor protein]-L-lysine.. Its function is as follows. E3 ubiquitin-protein ligase which mediates ubiquitination and subsequent proteasomal degradation of target proteins. Involved in chromosome segregation and cell cycle regulation. May play a role in the acrosome reaction and fertilization. The polypeptide is E3 ubiquitin-protein ligase Trim36 (Trim36) (Mus musculus (Mouse)).